We begin with the raw amino-acid sequence, 452 residues long: Trigger factor (452 aa).

Positions 169 to 254 constitute a PPIase FKBP-type domain; the sequence is GDQLLIDFVG…VQEVRAPVDG (86 aa).

This sequence belongs to the FKBP-type PPIase family. Tig subfamily.

It localises to the cytoplasm. It catalyses the reaction [protein]-peptidylproline (omega=180) = [protein]-peptidylproline (omega=0). Involved in protein export. Acts as a chaperone by maintaining the newly synthesized protein in an open conformation. Functions as a peptidyl-prolyl cis-trans isomerase. This Caulobacter vibrioides (strain ATCC 19089 / CIP 103742 / CB 15) (Caulobacter crescentus) protein is Trigger factor (tig).